The chain runs to 642 residues: Acid beta-fructofuranosidase (642 aa).

At 1–22 the chain is on the cytoplasmic side; that stretch reads MRNDSPYTPLLNASHNNHRRRE. A propeptide spans 1 to 95 (removed in mature form); the sequence is MRNDSPYTPL…LSGNLVGEGG (95 aa). The helical; Signal-anchor for type II membrane protein transmembrane segment at 23–43 threads the bilayer; sequence LLLLFSGLLLLASIIAFSAYI. Topologically, residues 44–642 are lumenal; that stretch reads AQPHADADVS…YHPDQKRQTS (599 aa). Asn100 is a glycosylation site (N-linked (GlcNAc...) asparagine). Substrate contacts are provided by residues 119-122, Gln138, Trp146, 181-182, and 245-246; these read WMND, WT, and RD. Asp122 is a catalytic residue. N-linked (GlcNAc...) asparagine glycosylation occurs at Asn267. Substrate-binding residues include Glu300 and Asp333. Cysteines 490 and 538 form a disulfide. N-linked (GlcNAc...) asparagine glycans are attached at residues Asn491 and Asn615.

Belongs to the glycosyl hydrolase 32 family. May be present in two forms, a 70 kDa monomer and a heterodimer of the 30 kDa and 38 kDa subunits. The ratio of the levels of the two forms within cells appears to be regulated developmentally.

The protein resides in the membrane. Its subcellular location is the vacuole. It localises to the vacuole lumen. The catalysed reaction is Hydrolysis of terminal non-reducing beta-D-fructofuranoside residues in beta-D-fructofuranosides.. Its pathway is glycan biosynthesis; sucrose metabolism. This Vicia faba (Broad bean) protein is Acid beta-fructofuranosidase (VCINV).